Consider the following 482-residue polypeptide: Ribosomal protein S6 kinase beta-2 (482 aa).

The segment at 1–26 (MAAVFDLDLETEEGSEGEGEPELSPA) is disordered. Positions 7-21 (LDLETEEGSEGEGEP) are enriched in acidic residues. S15 carries the post-translational modification Phosphoserine. Positions 67 to 328 (FELLRVLGKG…AADVQRHPFF (262 aa)) constitute a Protein kinase domain. ATP is bound by residues 73–81 (LGKGGYGKV) and K99. Residue D194 is the Proton acceptor of the active site. Positions 329–399 (RHMNWDDLLA…VAPSVLDSIK (71 aa)) constitute an AGC-kinase C-terminal domain. Positions 407 to 482 (KLRSPRRLNS…SKRGRGRPGR (76 aa)) are disordered. A phosphoserine mark is found at S417 and S423. Pro residues predominate over residues 437–466 (PSLPEPTELPLPPLLPPPPPSTTAPLPIRP). Residues 471 to 477 (KKSKRGR) carry the Nuclear localization signal motif. Over residues 471–482 (KKSKRGRGRPGR) the composition is skewed to basic residues. S473 carries the post-translational modification Phosphoserine; by PKC.

The protein belongs to the protein kinase superfamily. AGC Ser/Thr protein kinase family. S6 kinase subfamily. Phosphorylated and activated by MTOR. Phosphorylation by PKC within the NLS in response to mitogenic stimuli causes cytoplasmic retention.

It localises to the cytoplasm. It is found in the nucleus. The enzyme catalyses L-seryl-[protein] + ATP = O-phospho-L-seryl-[protein] + ADP + H(+). The catalysed reaction is L-threonyl-[protein] + ATP = O-phospho-L-threonyl-[protein] + ADP + H(+). In terms of biological role, phosphorylates specifically ribosomal protein S6. Seems to act downstream of mTOR signaling in response to growth factors and nutrients to promote cell proliferation, cell growth and cell cycle progression in an alternative pathway regulated by MEAK7. The chain is Ribosomal protein S6 kinase beta-2 (RPS6KB2) from Homo sapiens (Human).